The primary structure comprises 713 residues: Leucine-rich repeat-containing protein 4B (713 aa).

The first 35 residues, 1–35 (MARARGSPCPPLPPGRMSWPHGALLFLWLFSPPLG), serve as a signal peptide directing secretion. Residues 36-576 (AGGGGVAVTS…DLDDVMKTTK (541 aa)) lie on the Extracellular side of the membrane. Positions 48-86 (GGGSPPATSCPVACSCSNQASRVICTRRDLAEVPASIPV) constitute an LRRNT domain. 9 LRR repeats span residues 87–108 (NTRYLNLQENGIQVIRTDTFKH), 111–132 (HLEILQLSKNLVRKIEVGAFNG), 135–156 (SLNTLELFDNRLTTVPTQAFEY), 159–180 (KLRELWLRNNPIESIPSYAFNR), 183–205 (SLRRLDLGELKRLEYISEAAFEG), 208–229 (NLRYLNLGMCNLKDIPNLTALV), 230–251 (RLEELELSGNRLDLIRPGSFQG), 254–275 (SLRKLWLMHAQVATIERNAFDD), and 278–299 (SLEELNLSHNNLMSLPHDLFTP). Residue asparagine 224 is glycosylated (N-linked (GlcNAc...) asparagine). Residues asparagine 283, asparagine 333, asparagine 374, asparagine 400, asparagine 422, asparagine 425, asparagine 444, and asparagine 452 are each glycosylated (N-linked (GlcNAc...) asparagine). An LRRCT domain is found at 311–363 (NPWHCNCDVLWLSWWLKETVPSNTTCCARCHAPAGLKGRYIGELDQSHFTCYA). Residues 364-452 (PVIVEPPTDL…GNTTASATLN (89 aa)) form the Ig-like C2-type domain. A disulfide bond links cysteine 385 and cysteine 436. The interval 497–551 (TQPGEEALQPRGTEKEPPGPTTDGVWGGGRPGDAAGPASSSTTAPAPRSSRPTEK) is disordered. Positions 528 to 546 (GDAAGPASSSTTAPAPRSS) are enriched in low complexity. The chain crosses the membrane as a helical span at residues 577–597 (IIIGCFVAITFMAAVMLVAFY). The Cytoplasmic segment spans residues 598–713 (KLRKQHQLHK…SKENVQETQI (116 aa)). Serine 693 carries the post-translational modification Phosphoserine. Positions 694-713 (IHEPLLFKSGSKENVQETQI) are disordered. The span at 703–713 (GSKENVQETQI) shows a compositional bias: basic and acidic residues.

In terms of assembly, interacts with PTPRF. Interacts with DLG4. In terms of processing, N-glycosylated. O-glycosylated; contains sialic acid.

It is found in the membrane. The protein localises to the presynaptic cell membrane. Functionally, synaptic adhesion protein. Regulates the formation of excitatory synapses. The trans-synaptic adhesion between LRRC4B and PTPRF regulates the formation of excitatory synapses in a bidirectional manner. In Homo sapiens (Human), this protein is Leucine-rich repeat-containing protein 4B (LRRC4B).